The primary structure comprises 603 residues: Arginine--tRNA ligase (603 aa).

Positions 143-153 (PNIAKEMHVGH) match the 'HIGH' region motif.

This sequence belongs to the class-I aminoacyl-tRNA synthetase family. In terms of assembly, monomer.

It is found in the cytoplasm. The enzyme catalyses tRNA(Arg) + L-arginine + ATP = L-arginyl-tRNA(Arg) + AMP + diphosphate. This is Arginine--tRNA ligase from Prochlorococcus marinus (strain MIT 9303).